Reading from the N-terminus, the 289-residue chain is Cbb3-type cytochrome c oxidase subunit FixP (289 aa).

The Cytoplasmic segment spans residues methionine 1 to arginine 33. A helical membrane pass occupies residues tryptophan 34–tryptophan 56. At proline 57–glutamate 289 the chain is on the periplasmic side. Cytochrome c domains are found at residues phenylalanine 110 to threonine 198 and histidine 205 to glycine 286. Positions 123, 126, 127, 175, 218, 221, 222, and 263 each coordinate heme c.

Belongs to the CcoP / FixP family. Component of the cbb3-type cytochrome c oxidase at least composed of FixN, FixO, FixQ and FixP. Requires heme c as cofactor.

It localises to the cell inner membrane. It functions in the pathway energy metabolism; oxidative phosphorylation. Functionally, C-type cytochrome. Part of the cbb3-type cytochrome c oxidase complex. FixP subunit is required for transferring electrons from donor cytochrome c via its heme groups to FixO subunit. From there, electrons are shuttled to the catalytic binuclear center of FixN subunit where oxygen reduction takes place. The complex also functions as a proton pump. In Rhizobium meliloti (strain 1021) (Ensifer meliloti), this protein is Cbb3-type cytochrome c oxidase subunit FixP.